The primary structure comprises 406 residues: Arginine decarboxylase (406 aa).

Residue Lys8 is modified to N6-(pyridoxal phosphate)lysine. Substrate is bound at residue 192–202 (VDFGGGLGIDY).

This sequence belongs to the Orn/Lys/Arg decarboxylase class-II family. SpeA subfamily. It depends on pyridoxal 5'-phosphate as a cofactor. Mg(2+) serves as cofactor.

The enzyme catalyses L-arginine + H(+) = agmatine + CO2. It functions in the pathway amine and polyamine biosynthesis; agmatine biosynthesis; agmatine from L-arginine: step 1/1. This chain is Arginine decarboxylase (SPE2), found in Theobroma cacao (Cacao).